Reading from the N-terminus, the 198-residue chain is Type 1 fimbriae regulatory protein FimE (198 aa).

The 183-residue stretch at 2–184 (SKRRYLTGKE…NAARFAGLWE (183 aa)) folds into the Tyr recombinase domain. Active-site residues include Arg-41, Lys-66, His-136, Arg-139, and His-162. Catalysis depends on Tyr-171, which acts as the O-(3'-phospho-DNA)-tyrosine intermediate.

This sequence belongs to the 'phage' integrase family.

In terms of biological role, fimE is one of the 2 regulatory proteins which control the phase variation of type 1 fimbriae in E.coli. These proteins mediate the periodic inversion of a 300bp DNA segment that harbors the promoter for the fimbrial structural gene, fimA. FimE switches fimA off. This chain is Type 1 fimbriae regulatory protein FimE (fimE), found in Escherichia coli O6:H1 (strain CFT073 / ATCC 700928 / UPEC).